A 539-amino-acid chain; its full sequence is MAKDLKFSEDARQAMLRGVDKLANAVKVTIGPKGRNVVLDKDYTTPLITNDGVTIAKEIELEDPYENMGAKLVQEVANKTNEIAGDGTTTATVLAQSMIQEGLKNVTSGANPVGLRQGIDKAVQVAIEALHEISQKVENKNEIAQVGAISAADEEIGRYISEAMDKVGNDGVITIEESNGFNTELEVVEGMQFDRGYQSPYMVTDSDKMIAELERPYILVTDKKISSFQDILPLLEQVVQASRPILIVADEVEGDALTNIVLNRMRGTFTAVAVKAPGFGDRRKAMLEDLAILTGAQVITDDLGLELKDASLDMLGTANKVEVTKDHTTVVDGNGDENNIDARVGQIKAQIEETDSEFDKEKLQERLAKLAGGVAVIKVGAASETELKERKLRIEDALNSTRAAVEEGIVAGGGTALVNIYQKVSEIKAEGDVETGVNIVLKALQAPVRQIAENAGLEGSIIVERLKHAEAGVGFNAATNEWVNMLEEGIVDPTKVTRSALQHAASVAAMFLTTEAVVASIPEPENNEQPGMGGMPGMM.

ATP is bound by residues 29–32 (TIGP), 86–90 (DGTTT), Gly413, 476–478 (NAA), and Asp492.

Belongs to the chaperonin (HSP60) family. As to quaternary structure, forms a cylinder of 14 subunits composed of two heptameric rings stacked back-to-back. Interacts with the co-chaperonin GroES.

The protein localises to the cytoplasm. The catalysed reaction is ATP + H2O + a folded polypeptide = ADP + phosphate + an unfolded polypeptide.. Together with its co-chaperonin GroES, plays an essential role in assisting protein folding. The GroEL-GroES system forms a nano-cage that allows encapsulation of the non-native substrate proteins and provides a physical environment optimized to promote and accelerate protein folding. This is Chaperonin GroEL from Staphylococcus epidermidis (strain ATCC 12228 / FDA PCI 1200).